The sequence spans 621 residues: Chaperone protein HscA homolog (621 aa).

It belongs to the heat shock protein 70 family.

Its function is as follows. Chaperone involved in the maturation of iron-sulfur cluster-containing proteins. Has a low intrinsic ATPase activity which is markedly stimulated by HscB. This is Chaperone protein HscA homolog from Azotobacter vinelandii (strain DJ / ATCC BAA-1303).